The sequence spans 381 residues: Erythronate-4-phosphate dehydrogenase (381 aa).

The substrate site is built by Ser45 and Thr67. Residues Asp148, 207-209 (ASR), and Asp233 contribute to the NAD(+) site. Arg209 is a catalytic residue. Glu238 is an active-site residue. The active-site Proton donor is the His255. Gly258 is an NAD(+) binding site.

It belongs to the D-isomer specific 2-hydroxyacid dehydrogenase family. PdxB subfamily. Homodimer.

The protein localises to the cytoplasm. It carries out the reaction 4-phospho-D-erythronate + NAD(+) = (R)-3-hydroxy-2-oxo-4-phosphooxybutanoate + NADH + H(+). It functions in the pathway cofactor biosynthesis; pyridoxine 5'-phosphate biosynthesis; pyridoxine 5'-phosphate from D-erythrose 4-phosphate: step 2/5. Catalyzes the oxidation of erythronate-4-phosphate to 3-hydroxy-2-oxo-4-phosphonooxybutanoate. The sequence is that of Erythronate-4-phosphate dehydrogenase from Idiomarina loihiensis (strain ATCC BAA-735 / DSM 15497 / L2-TR).